A 546-amino-acid polypeptide reads, in one-letter code: Methionine--tRNA ligase (546 aa).

The 'HIGH' region motif lies at 15–25 (PYANGPIHLGH). Residues Cys146, Cys149, Cys159, and Cys162 each coordinate Zn(2+). Residues 332 to 336 (KMSKS) carry the 'KMSKS' region motif. Position 335 (Lys335) interacts with ATP.

The protein belongs to the class-I aminoacyl-tRNA synthetase family. MetG type 1 subfamily. Monomer. Zn(2+) serves as cofactor.

It is found in the cytoplasm. The enzyme catalyses tRNA(Met) + L-methionine + ATP = L-methionyl-tRNA(Met) + AMP + diphosphate. Functionally, is required not only for elongation of protein synthesis but also for the initiation of all mRNA translation through initiator tRNA(fMet) aminoacylation. The chain is Methionine--tRNA ligase from Coxiella burnetii (strain RSA 331 / Henzerling II).